The chain runs to 969 residues: Exoribonuclease II, mitochondrial (969 aa).

Residues 1–41 (MVVRRKVHVLLIARSFHSYTPCFRVTTRGKRQRSKSKQQAK) constitute a mitochondrion transit peptide. The segment covering 28 to 38 (RGKRQRSKSKQ) has biased composition (basic residues). The disordered stretch occupies residues 28-54 (RGKRQRSKSKQQAKVELDHTRELDNDQ). The segment covering 40-51 (AKVELDHTRELD) has biased composition (basic and acidic residues). Residues 522–853 (RYDFGDLRVF…NHLQIHRHLQ (332 aa)) form the RNB domain.

The protein belongs to the RNR ribonuclease family. In terms of assembly, MSU1 and SUV3 are the two components of the mitochondrial degradosome (mtEXO).

It is found in the mitochondrion matrix. The catalysed reaction is Exonucleolytic cleavage in the 3'- to 5'-direction to yield nucleoside 5'-phosphates.. Essential for mitochondrial biogenesis. Functionally, required for intron-independent turnover and processing of mitochondrial RNA. Participates in 3' mtRNA processing where it hydrolyzes single-stranded RNA or partially double-stranded RNA with 3' single-stranded tails. This chain is Exoribonuclease II, mitochondrial (DSS1), found in Saccharomyces cerevisiae (strain ATCC 204508 / S288c) (Baker's yeast).